A 362-amino-acid chain; its full sequence is Cap-specific mRNA (nucleoside-2'-O-)-methyltransferase 1 (362 aa).

Positions 87-294 constitute a RrmJ-type SAM-dependent 2'-O-MTase domain; it reads SFGNRAGHKL…ERYLVCLGFL (208 aa). The S-adenosyl-L-methionine site is built by Gly130 and Asp207. Lys248 functions as the Proton acceptor in the catalytic mechanism.

It localises to the nucleus. It catalyses the reaction a 5'-end (N(7)-methyl 5'-triphosphoguanosine)-ribonucleoside in mRNA + S-adenosyl-L-methionine = a 5'-end (N(7)-methyl 5'-triphosphoguanosine)-(2'-O-methyl-ribonucleoside) in mRNA + S-adenosyl-L-homocysteine + H(+). Its function is as follows. S-adenosyl-L-methionine-dependent methyltransferase that mediates RNA cap1 2'-O-ribose methylation to the 5'-cap structure of spliced leader and U1 small nuclear RNAs. Methylates the ribose of the first nucleotide of a m(7)GpppG-capped RNA to produce m(7)GpppNmp (cap1). Cap1 modification is linked to higher levels of translation. Recognizes a guanosine cap on RNA independent of its N(7) methylation status. In Trypanosoma cruzi (strain CL Brener), this protein is Cap-specific mRNA (nucleoside-2'-O-)-methyltransferase 1.